The sequence spans 436 residues: MASSSLTSKSILGSTKLGSSSLPSELRRLSSPAVQISLRTQTRKNFQIQATGSSYGTHFRVSTFGESHGGGVGCIIDGCPPRIPLTESDLQFDLDRRRPGQSRITTPRKETDTCRISSGVSEGMTTGTPIHVFVPNTDQRGLDYSEMSVAYRPSHADATYDMKYGVRSVQGGGRSSARETIGRVAPGALAKKILKQFAGTEILAYVSQVHHVVLPEELVDHENLTLEQIENNIVRCPNPEYAEKMIAAIDAVRTKGNSVGGVVTCIVRNAPRGLGTPVFDKLEAELAKACMSLPATKGFEFGSGFAGTFLTGLEHNDEFYTDENGRIRTRTNRSGGIQGGISNGEIINMRVAFKPTSTIGRKQNTVTRDKVETEMIARGRHDPCVVPRAVPMVEAMVALVLVDQLMAQYAQCHLFPINPELQEPLQIEQPQNATAL.

The tract at residues 1-24 (MASSSLTSKSILGSTKLGSSSLPS) is disordered. The N-terminal 50 residues, 1–50 (MASSSLTSKSILGSTKLGSSSLPSELRRLSSPAVQISLRTQTRKNFQIQA), are a transit peptide targeting the chloroplast.

The protein belongs to the chorismate synthase family. Homotetramer. It depends on FMNH2 as a cofactor.

The protein resides in the plastid. The protein localises to the chloroplast. It catalyses the reaction 5-O-(1-carboxyvinyl)-3-phosphoshikimate = chorismate + phosphate. It participates in metabolic intermediate biosynthesis; chorismate biosynthesis; chorismate from D-erythrose 4-phosphate and phosphoenolpyruvate: step 7/7. Its function is as follows. Catalyzes the last common step of the biosynthesis of aromatic amino acids, produced via the shikimic acid pathway. The sequence is that of Chorismate synthase, chloroplastic (EMB1144) from Arabidopsis thaliana (Mouse-ear cress).